A 344-amino-acid polypeptide reads, in one-letter code: MSLDLDQVVVDAQNAFASVEDNASLENEKARFLGKSGVLTDLLKGLGKLDPETRKTEGARINQAKSRVEEALTARRQALADALMNARLAAEAIDVTLPGRDVAEGSLHPVMNTWERVAKIFGSIGFDVADGPEIESDWMNFTALNNPDNHPARSMQDTFYIDGRDSEDKLLLLRTHTSPMQVRYARMHVEKYKHLDRIPPIKVIAPGRTYRVDSDATHSPMFHQVEGLWIADNISFADLKGVYTDFLRNFFERDDIQVRFRPSYFPFTEPSAEIDMAFGNGKWLEISGSGQVHPTVVRNMGLDPERYIGFAFGSGLERLTMLRYGINDLRLFFEGDVRFLRQFA.

Mg(2+) is bound at residue glutamate 269.

Belongs to the class-II aminoacyl-tRNA synthetase family. Phe-tRNA synthetase alpha subunit type 1 subfamily. Tetramer of two alpha and two beta subunits. Mg(2+) serves as cofactor.

The protein resides in the cytoplasm. The enzyme catalyses tRNA(Phe) + L-phenylalanine + ATP = L-phenylalanyl-tRNA(Phe) + AMP + diphosphate + H(+). The chain is Phenylalanine--tRNA ligase alpha subunit from Ralstonia pickettii (strain 12J).